Consider the following 80-residue polypeptide: Putative membrane protein insertion efficiency factor (80 aa).

This sequence belongs to the UPF0161 family.

Its subcellular location is the cell membrane. Functionally, could be involved in insertion of integral membrane proteins into the membrane. The chain is Putative membrane protein insertion efficiency factor from Limosilactobacillus fermentum (strain NBRC 3956 / LMG 18251) (Lactobacillus fermentum).